The chain runs to 563 residues: NAD-dependent malic enzyme (563 aa).

Tyr-101 functions as the Proton donor in the catalytic mechanism. Arg-154 is a binding site for NAD(+). Catalysis depends on Lys-172, which acts as the Proton acceptor. A divalent metal cation-binding residues include Glu-243, Asp-244, and Asp-267. Residues Asp-267 and Asn-416 each contribute to the NAD(+) site.

This sequence belongs to the malic enzymes family. Homotetramer. Requires Mg(2+) as cofactor. Mn(2+) is required as a cofactor.

It carries out the reaction (S)-malate + NAD(+) = pyruvate + CO2 + NADH. The catalysed reaction is oxaloacetate + H(+) = pyruvate + CO2. The protein is NAD-dependent malic enzyme of Pseudomonas syringae pv. syringae (strain B728a).